Here is a 274-residue protein sequence, read N- to C-terminus: NH(3)-dependent NAD(+) synthetase (274 aa).

Residue 46–53 (GISGGQDS) participates in ATP binding. Aspartate 52 is a binding site for Mg(2+). Arginine 140 lines the deamido-NAD(+) pocket. Position 160 (threonine 160) interacts with ATP. Residue glutamate 165 participates in Mg(2+) binding. 2 residues coordinate deamido-NAD(+): lysine 173 and aspartate 180. Positions 189 and 211 each coordinate ATP. 260–261 (HK) provides a ligand contact to deamido-NAD(+).

It belongs to the NAD synthetase family. In terms of assembly, homodimer.

The catalysed reaction is deamido-NAD(+) + NH4(+) + ATP = AMP + diphosphate + NAD(+) + H(+). It participates in cofactor biosynthesis; NAD(+) biosynthesis; NAD(+) from deamido-NAD(+) (ammonia route): step 1/1. Catalyzes the ATP-dependent amidation of deamido-NAD to form NAD. Uses ammonia as a nitrogen source. This is NH(3)-dependent NAD(+) synthetase from Streptococcus pyogenes serotype M1.